A 248-amino-acid polypeptide reads, in one-letter code: Type III pantothenate kinase (248 aa).

6–13 (DIGNTETK) is a binding site for ATP. A substrate-binding site is contributed by 103-106 (GSDR). Aspartate 105 serves as the catalytic Proton acceptor. Aspartate 124 is a binding site for K(+). Threonine 127 is an ATP binding site. Threonine 178 provides a ligand contact to substrate.

This sequence belongs to the type III pantothenate kinase family. In terms of assembly, homodimer. The cofactor is NH4(+). It depends on K(+) as a cofactor.

It localises to the cytoplasm. The enzyme catalyses (R)-pantothenate + ATP = (R)-4'-phosphopantothenate + ADP + H(+). It participates in cofactor biosynthesis; coenzyme A biosynthesis; CoA from (R)-pantothenate: step 1/5. Functionally, catalyzes the phosphorylation of pantothenate (Pan), the first step in CoA biosynthesis. In Pelagibacter ubique (strain HTCC1062), this protein is Type III pantothenate kinase.